The chain runs to 260 residues: Hydroxyacylglutathione hydrolase (260 aa).

Zn(2+)-binding residues include H61, H63, D65, H66, H119, D138, and H176.

This sequence belongs to the metallo-beta-lactamase superfamily. Glyoxalase II family. Monomer. It depends on Zn(2+) as a cofactor.

The enzyme catalyses an S-(2-hydroxyacyl)glutathione + H2O = a 2-hydroxy carboxylate + glutathione + H(+). The protein operates within secondary metabolite metabolism; methylglyoxal degradation; (R)-lactate from methylglyoxal: step 2/2. In terms of biological role, thiolesterase that catalyzes the hydrolysis of S-D-lactoyl-glutathione to form glutathione and D-lactic acid. The sequence is that of Hydroxyacylglutathione hydrolase from Brucella anthropi (strain ATCC 49188 / DSM 6882 / CCUG 24695 / JCM 21032 / LMG 3331 / NBRC 15819 / NCTC 12168 / Alc 37) (Ochrobactrum anthropi).